The following is a 369-amino-acid chain: MRKQSLVTLLMVLLSLVWLPASAERIRDLVTVQGVRDNALIGYGLVVGLDGSGDQTMQTPFTTQSLSNMLSQLGITVPPGTNMQLKNVAAVMVTAKLPAFSRAGQTIDVVVSSMGNAKSIRGGTLLMTPLKGVDNQVYALAQGNVLVGGAGAAAGGSSVQVNQLAGGRISNGATIERELPTTFGTDGIINLQLNSEDFTLAQQVSDAINRQRGFGSATAIDARTIQVLVPRGGSSQVRFLADIQNIPINVDPGDAKVIINSRTGSVVMNRNVVLDSCAVAQGNLSVVVDKQNIVSQPDTPFGGGQTVVTPNTQISVQQQGGVLQRVNASPNLNNVVRALNSLGATPIDLMSILQAMESAGCLRAKLEII.

A signal peptide spans 1–23 (MRKQSLVTLLMVLLSLVWLPASA).

This sequence belongs to the FlgI family. In terms of assembly, the basal body constitutes a major portion of the flagellar organelle and consists of four rings (L,P,S, and M) mounted on a central rod.

The protein localises to the periplasm. The protein resides in the bacterial flagellum basal body. In terms of biological role, assembles around the rod to form the L-ring and probably protects the motor/basal body from shearing forces during rotation. This Yersinia pseudotuberculosis serotype I (strain IP32953) protein is Flagellar P-ring protein 1.